A 256-amino-acid chain; its full sequence is Alcohol dehydrogenase (256 aa).

12–35 (FVAGLGGIGLDTSKELVKRDLKNL) serves as a coordination point for NAD(+). Position 140 (Ser-140) interacts with substrate. Residue Tyr-153 is the Proton acceptor of the active site.

This sequence belongs to the short-chain dehydrogenases/reductases (SDR) family. In terms of assembly, homodimer.

The enzyme catalyses a primary alcohol + NAD(+) = an aldehyde + NADH + H(+). The catalysed reaction is a secondary alcohol + NAD(+) = a ketone + NADH + H(+). This is Alcohol dehydrogenase (Adh) from Drosophila yakuba (Fruit fly).